Consider the following 63-residue polypeptide: Small ribosomal subunit protein eS30B (63 aa).

Residues 1 to 35 (MAKVHGSLARAGKVKSQTPKVEKTEKPKKPKGRAY) are disordered. Ser-16 carries the post-translational modification Phosphoserine. Thr-48 is modified (phosphothreonine).

The protein belongs to the eukaryotic ribosomal protein eS30 family. In terms of assembly, component of the small ribosomal subunit (SSU). Mature yeast ribosomes consist of a small (40S) and a large (60S) subunit. The 40S small subunit contains 1 molecule of ribosomal RNA (18S rRNA) and 33 different proteins (encoded by 57 genes). The large 60S subunit contains 3 rRNA molecules (25S, 5.8S and 5S rRNA) and 46 different proteins (encoded by 81 genes).

It localises to the cytoplasm. Component of the ribosome, a large ribonucleoprotein complex responsible for the synthesis of proteins in the cell. The small ribosomal subunit (SSU) binds messenger RNAs (mRNAs) and translates the encoded message by selecting cognate aminoacyl-transfer RNA (tRNA) molecules. The large subunit (LSU) contains the ribosomal catalytic site termed the peptidyl transferase center (PTC), which catalyzes the formation of peptide bonds, thereby polymerizing the amino acids delivered by tRNAs into a polypeptide chain. The nascent polypeptides leave the ribosome through a tunnel in the LSU and interact with protein factors that function in enzymatic processing, targeting, and the membrane insertion of nascent chains at the exit of the ribosomal tunnel. The chain is Small ribosomal subunit protein eS30B from Saccharomyces cerevisiae (strain ATCC 204508 / S288c) (Baker's yeast).